Consider the following 304-residue polypeptide: Probable aquaporin NIP5-1 (304 aa).

A run of 2 helical transmembrane segments spans residues 80–100 and 106–126; these read LGAE…GPIV and GAET…IIIL. Residues 137–139 carry the NPA 1 motif; it reads NPS. The next 3 membrane-spanning stretches (helical) occupy residues 157 to 177, 195 to 215, and 219 to 239; these read AYIA…KGVF, AFAL…AVAT, and AVGE…ILVA. Residues 248 to 250 carry the NPA 2 motif; that stretch reads NPV. The chain crosses the membrane as a helical span at residues 266–286; the sequence is WVYLVAPTLGAISGAAVYTGV. S301 is modified (phosphoserine).

It belongs to the MIP/aquaporin (TC 1.A.8) family. NIP (TC 1.A.8.12) subfamily. As to expression, expressed in rosette leaves.

It localises to the cell membrane. Boric acid transporter. Low water transport activity. Plays an important role as plasma membrane boric acid channel for the boron uptake required for plant growth and development under boron limitation. The polypeptide is Probable aquaporin NIP5-1 (NIP5-1) (Arabidopsis thaliana (Mouse-ear cress)).